The primary structure comprises 445 residues: T-box transcription factor TBX20 (445 aa).

The T-box DNA-binding region spans 108–287 (LWDKFHELGT…SNPFAKGFRD (180 aa)). The disordered stretch occupies residues 318-337 (EEDVLGEESQTTQSRGSAFT). A compositionally biased stretch (polar residues) spans 325–337 (ESQTTQSRGSAFT).

In terms of tissue distribution, prominently expressed in the extraembryonic mesoderm, developing heart, eye analage and motor neurons of hindbrain and spinal cord. Expressed in extraembryonic tissues such as the amnion and allantois.

Its subcellular location is the nucleus. Functionally, acts as a transcriptional activator and repressor required for cardiac development and may have key roles in the maintenance of functional and structural phenotypes in adult heart. The polypeptide is T-box transcription factor TBX20 (Tbx20) (Mus musculus (Mouse)).